We begin with the raw amino-acid sequence, 197 residues long: Transposon Tn10 TetC protein (197 aa).

One can recognise an HTH tetR-type domain in the interval Lys-12 to Ile-72. The segment at residues Ser-35–Phe-54 is a DNA-binding region (H-T-H motif).

The sequence is that of Transposon Tn10 TetC protein (tetC) from Escherichia coli.